A 183-amino-acid chain; its full sequence is MKFSLFFSVFFLAVLHACLSESEIDLEDEEHFMSSDSFLSEIQDESRGKTCIERNKECTNDRHGCCRGKIFKDKCTCVKNGKTEKCVCTQKKWAKIIESYIGDIPALPKPVDDKCVPKHADCSKRKDECCKGGIFKYQCKCYDMYDDDGEKTDLCGCVSPVEHQAIEGALRIAKKLIGDRWGR.

An N-terminal signal peptide occupies residues 1-20 (MKFSLFFSVFFLAVLHACLS). A propeptide spanning residues 21 to 47 (ESEIDLEDEEHFMSSDSFLSEIQDESR) is cleaved from the precursor. The Processing quadruplet motif signature appears at 44–47 (DESR). Cystine bridges form between cysteine 51/cysteine 66, cysteine 58/cysteine 75, cysteine 65/cysteine 88, cysteine 77/cysteine 86, cysteine 115/cysteine 130, cysteine 122/cysteine 139, cysteine 129/cysteine 157, and cysteine 141/cysteine 155. The segment at 164–177 (QAIEGALRIAKKLI) is predicted alpha-helix. Tryptophan 181 is modified (tryptophan amide).

It belongs to the neurotoxin 19 (CSTX) family. Double-CSTX subfamily. Post-translationally, cleavage of the propeptide depends on the processing quadruplet motif (XXXR, with at least one of X being E). As to expression, expressed by the venom gland.

The protein localises to the secreted. It localises to the target cell membrane. Spider venom toxin that exhibits cytolytic activity by forming an alpha-helix across the membrane. Lethal to insect larvae. Causes instant paralysis and death in the larvae of the flesh fly (S.carnaria) at doses of 20 ug/g, at doses of less than 10 ug/g causes reversible paralysis. Has cytolytic activity against insect Sf9 cells. Causes stable and irreversible depolarization of fly muscle fibers, leading to contracture at higher toxin concentrations. Destabilizes membranes. In Cheiracanthium punctorium (Yellow sac spider), this protein is DELTA-miturgitoxin-Cp1b.